The sequence spans 368 residues: Phosphoribosylformylglycinamidine cyclo-ligase (368 aa).

The protein belongs to the AIR synthase family.

Its subcellular location is the cytoplasm. It carries out the reaction 2-formamido-N(1)-(5-O-phospho-beta-D-ribosyl)acetamidine + ATP = 5-amino-1-(5-phospho-beta-D-ribosyl)imidazole + ADP + phosphate + H(+). The protein operates within purine metabolism; IMP biosynthesis via de novo pathway; 5-amino-1-(5-phospho-D-ribosyl)imidazole from N(2)-formyl-N(1)-(5-phospho-D-ribosyl)glycinamide: step 2/2. The polypeptide is Phosphoribosylformylglycinamidine cyclo-ligase (Chelativorans sp. (strain BNC1)).